The primary structure comprises 156 residues: MNINATLIGQSVAFFIFVLFCMKYVWPPVIAALHERQKKIADGLDAASRAARDLELAQDKVGQQLREAKAQAAEIIEQAKKRGTQIVDEARETARVEADRVKAQAQAEIEQELNGVKDALRAQLGSLAVNGAEKILGATIDQNAHAELVNKLAAEI.

A helical transmembrane segment spans residues 12–32 (VAFFIFVLFCMKYVWPPVIAA).

It belongs to the ATPase B chain family. In terms of assembly, F-type ATPases have 2 components, F(1) - the catalytic core - and F(0) - the membrane proton channel. F(1) has five subunits: alpha(3), beta(3), gamma(1), delta(1), epsilon(1). F(0) has three main subunits: a(1), b(2) and c(10-14). The alpha and beta chains form an alternating ring which encloses part of the gamma chain. F(1) is attached to F(0) by a central stalk formed by the gamma and epsilon chains, while a peripheral stalk is formed by the delta and b chains.

The protein resides in the cell inner membrane. Its function is as follows. F(1)F(0) ATP synthase produces ATP from ADP in the presence of a proton or sodium gradient. F-type ATPases consist of two structural domains, F(1) containing the extramembraneous catalytic core and F(0) containing the membrane proton channel, linked together by a central stalk and a peripheral stalk. During catalysis, ATP synthesis in the catalytic domain of F(1) is coupled via a rotary mechanism of the central stalk subunits to proton translocation. Component of the F(0) channel, it forms part of the peripheral stalk, linking F(1) to F(0). The chain is ATP synthase subunit b from Pseudomonas syringae pv. tomato (strain ATCC BAA-871 / DC3000).